The sequence spans 291 residues: Peptide methionine sulfoxide reductase MsrB/MsrA (291 aa).

Residues 1 to 124 (MLANLQHLSD…NSAALRFVAR (124 aa)) enclose the MsrB domain. C113 (nucleophile) is an active-site residue. The peptide methionine sulfoxide reductase A stretch occupies residues 127–284 (GTALFAAGCF…PGGYCHVSLH (158 aa)). C135 is a catalytic residue.

In the N-terminal section; belongs to the MsrB Met sulfoxide reductase family. It in the C-terminal section; belongs to the MsrA Met sulfoxide reductase family.

It carries out the reaction L-methionyl-[protein] + [thioredoxin]-disulfide + H2O = L-methionyl-(R)-S-oxide-[protein] + [thioredoxin]-dithiol. The enzyme catalyses L-methionyl-[protein] + [thioredoxin]-disulfide + H2O = L-methionyl-(S)-S-oxide-[protein] + [thioredoxin]-dithiol. It catalyses the reaction [thioredoxin]-disulfide + L-methionine + H2O = L-methionine (S)-S-oxide + [thioredoxin]-dithiol. Functionally, has an important function as a repair enzyme for proteins that have been inactivated by oxidation. Catalyzes the reversible oxidation-reduction of methionine sulfoxide in proteins to methionine. The protein is Peptide methionine sulfoxide reductase MsrB/MsrA (msrAB) of Treponema pallidum (strain Nichols).